The sequence spans 266 residues: Gap junction beta-4 protein (266 aa).

An intramembrane segment occupies 2–13; the sequence is NWAFLQGLLSGV. Over 14 to 20 the chain is Cytoplasmic; sequence NKYSTVL. A helical transmembrane segment spans residues 21-40; sequence SRIWLSVVFIFRVLVYVVAA. At 41–73 the chain is on the extracellular side; it reads EEVWDDEQKDFVCNTKQPGCPNVCYDEFFPVSH. 3 disulfide bridges follow: Cys53–Cys175, Cys60–Cys169, and Cys64–Cys164. Residues 74 to 94 form a helical membrane-spanning segment; it reads VRLWALQLILVTCPSLLVVMH. Topologically, residues 95 to 130 are cytoplasmic; the sequence is VAYREERERKHHLKHGPNAPSLYDNLSKKRGGLWWT. A helical membrane pass occupies residues 131-151; that stretch reads YLLSLIFKAAVDAGFLYIFHR. Residues 152–184 lie on the Extracellular side of the membrane; sequence LYKDYDMPRVVACSVEPCPHTVDCYISRPTEKK. The chain crosses the membrane as a helical span at residues 185–205; sequence VFTYFMVTTAAICILLNLSEV. Residues 206–266 are Cytoplasmic-facing; sequence FYLVGKRCME…SAPVDAGGYP (61 aa).

This sequence belongs to the connexin family. Beta-type (group I) subfamily. As to quaternary structure, a hemichannel or connexon is composed of a hexamer of connexins. A functional gap junction is formed by the apposition of two hemichannels. Forms heteromeric channels with GJB2.

The protein resides in the cell membrane. It is found in the cell junction. The protein localises to the gap junction. Structural component of gap junctions. Gap junctions are dodecameric channels that connect the cytoplasm of adjoining cells. They are formed by the docking of two hexameric hemichannels, one from each cell membrane. Small molecules and ions diffuse from one cell to a neighboring cell via the central pore. This chain is Gap junction beta-4 protein (GJB4), found in Homo sapiens (Human).